The primary structure comprises 82 residues: Cytochrome b559 subunit alpha (82 aa).

Residues 22–36 traverse the membrane as a helical segment; it reads VIHAITLPSIFLAGF. H24 lines the heme pocket.

This sequence belongs to the PsbE/PsbF family. Heterodimer of an alpha subunit and a beta subunit. PSII is composed of 1 copy each of membrane proteins PsbA, PsbB, PsbC, PsbD, PsbE, PsbF, PsbH, PsbI, PsbJ, PsbK, PsbL, PsbM, PsbT, PsbX, PsbY, PsbZ, Psb30/Ycf12, peripheral proteins PsbO, CyanoQ (PsbQ), PsbU, PsbV and a large number of cofactors. It forms dimeric complexes. Requires heme b as cofactor.

It is found in the cellular thylakoid membrane. In terms of biological role, this b-type cytochrome is tightly associated with the reaction center of photosystem II (PSII). PSII is a light-driven water:plastoquinone oxidoreductase that uses light energy to abstract electrons from H(2)O, generating O(2) and a proton gradient subsequently used for ATP formation. It consists of a core antenna complex that captures photons, and an electron transfer chain that converts photonic excitation into a charge separation. The sequence is that of Cytochrome b559 subunit alpha from Synechococcus sp. (strain WH7803).